We begin with the raw amino-acid sequence, 724 residues long: Acyl-coenzyme A oxidase 2 (724 aa).

Positions 1–48 (MAMLSQPNDGHDHPEKKDPDTTPKQVAGVISSQDPPHPAKDVAEERAR) are disordered. Composition is skewed to basic and acidic residues over residues 9–21 (DGHDHPEKKDPDT) and 37–48 (HPAKDVAEERAR).

This sequence belongs to the acyl-CoA oxidase family. It depends on FAD as a cofactor.

It localises to the peroxisome. It carries out the reaction a 2,3-saturated acyl-CoA + O2 = a (2E)-enoyl-CoA + H2O2. It participates in lipid metabolism; peroxisomal fatty acid beta-oxidation. This Candida tropicalis (Yeast) protein is Acyl-coenzyme A oxidase 2 (POX2).